The sequence spans 397 residues: DnaJ protein homolog 1 (397 aa).

In terms of domain architecture, J spans 1-52 (KNASPDDLKKAYRKAAIKNHPDKGGDPEKFKELAQAYDVLSDPEKREIYDQY). The segment at 114–198 (GTSKKLSLSR…CKGEKVVQEK (85 aa)) adopts a CR-type zinc-finger fold. 4 CXXCXGXG motif repeats span residues 127–134 (CSKCNGKG), 143–150 (CASCQGSG), 170–177 (CNDCKGTG), and 186–193 (CPLCKGEK). A disordered region spans residues 367–397 (MRRKQHQHAQEAYDEDDEGHGGGQRVQCAQQ). Cysteine methyl ester is present on Cys394. Cys394 carries the S-farnesyl cysteine lipid modification. Positions 395 to 397 (AQQ) are cleaved as a propeptide — removed in mature form.

The protein localises to the membrane. Its function is as follows. Plays a continuous role in plant development probably in the structural organization of compartments. This is DnaJ protein homolog 1 (DNAJ1) from Allium porrum (Leek).